We begin with the raw amino-acid sequence, 239 residues long: Probable GTP-binding protein EngB (239 aa).

An EngB-type G domain is found at 23-219 (QVPEIAFAGR…NDKILELLGL (197 aa)). Residues 31 to 38 (GRSNAGKS), 58 to 62 (GRTQH), 92 to 95 (DLPG), 159 to 162 (TKSD), and 193 to 200 (FTAQLFSA) each bind GTP. Mg(2+) is bound by residues serine 38 and threonine 60.

It belongs to the TRAFAC class TrmE-Era-EngA-EngB-Septin-like GTPase superfamily. EngB GTPase family. Requires Mg(2+) as cofactor.

Functionally, necessary for normal cell division and for the maintenance of normal septation. This chain is Probable GTP-binding protein EngB, found in Herminiimonas arsenicoxydans.